The following is a 221-amino-acid chain: Putative efflux system component YhbJ (221 aa).

The chain crosses the membrane as a helical span at residues 17–37 (LILTNIIGLIVVLAIIAGGAY).

This sequence belongs to the membrane fusion protein (MFP) (TC 8.A.1) family.

The protein resides in the cell membrane. This is Putative efflux system component YhbJ (yhbJ) from Bacillus subtilis (strain 168).